The primary structure comprises 163 residues: Nucleotide-binding protein RHA1_ro01989 (163 aa).

This sequence belongs to the YajQ family.

Nucleotide-binding protein. In Rhodococcus jostii (strain RHA1), this protein is Nucleotide-binding protein RHA1_ro01989.